A 516-amino-acid chain; its full sequence is MSVWVALALLGMCVSCTHVPPPRALIVSKEPPPALDSAPRPAIPEAVPLPSPVEEEIAGRLPPAPAAAPERVPESSQEREQKPESSKPQVVEPVSLASPVKPREAGSVPDVLPVPEVSSPHVAPPAPPAPTAPRPHRPSPPPVSPSASKPKQRAVPPSPPPASEPPREAEVQAEPEPAEDSPRAMVPEEPPEDEVPRVSRAVQLAVGQKLEVLYPGEGWVYVGEHTAQPGLRYHQRKLEESHSLFTFSAEREGDFVLAFSYFDVFRGDFVSDALAVKVVPKREGLARVVRAPEYRRTVSSPPDTVVSELSPAGTGTERRAEESGTSGSQRAAAHTGAPVRQDQTDTAVAEKAQHGTPRPDEKKDREPTVGGRDPVPSDAVAQGVSERYSPRKISPASQPSAPSAAPIEAHVPASAHKEGQEKRDHLAEARQFCAQGNARDALASLGDFFAQFPSHERMDEAWFLRGQAYEINGAQRNVRLALEAYKTILERFPHSPYWKKADERARFIKNFFIKIS.

The N-terminal stretch at 1-17 (MSVWVALALLGMCVSCT) is a signal peptide. 2 disordered regions span residues 29–197 (KEPP…EVPR) and 296–426 (RTVS…RDHL). The segment covering 71-85 (RVPESSQEREQKPES) has biased composition (basic and acidic residues). Residues 122–144 (VAPPAPPAPTAPRPHRPSPPPVS) show a composition bias toward pro residues. The span at 145–155 (PSASKPKQRAV) shows a compositional bias: low complexity. Basic and acidic residues predominate over residues 351–367 (KAQHGTPRPDEKKDREP). Low complexity predominate over residues 394–406 (SPASQPSAPSAAP). Residues 415 to 426 (AHKEGQEKRDHL) are compositionally biased toward basic and acidic residues.

This is an uncharacterized protein from Treponema pallidum (strain Nichols).